The sequence spans 214 residues: YINYKNMLHQHMLTLFNLLPVGSNISTWWNFGSMLLICLMIQTTTGFFLAIHYTANINLAFSSIMHISRDVPYGWIMQNTHAIGASLFFICIYTHIARGIYYGSYLNKEVWLSGTTLLIILMATAFFGYVLPWGQMSFWAATVITNLLTAIPYLGNTLTTWLWGGFAINDPTLTRFFALHFILPFAIISLSSIHILLLHNEGSNNPLGTNSDID.

The next 4 helical transmembrane spans lie at 31-51 (FGSM…FLAI), 75-96 (WIMQ…YTHI), 111-131 (WLSG…GYVL), and 176-196 (FFAL…IHIL). The heme b site is built by histidine 81 and histidine 95. Heme b is bound by residues histidine 180 and histidine 194. Histidine 199 is an a ubiquinone binding site.

The protein belongs to the cytochrome b family. In terms of assembly, the cytochrome bc1 complex contains 3 respiratory subunits (MT-CYB, CYC1 and UQCRFS1), 2 core proteins (UQCRC1 and UQCRC2) and probably 6 low-molecular weight proteins. Heme b is required as a cofactor.

The protein resides in the mitochondrion inner membrane. In terms of biological role, component of the ubiquinol-cytochrome c reductase complex (complex III or cytochrome b-c1 complex) that is part of the mitochondrial respiratory chain. The b-c1 complex mediates electron transfer from ubiquinol to cytochrome c. Contributes to the generation of a proton gradient across the mitochondrial membrane that is then used for ATP synthesis. In Lachesis muta muta (Bushmaster), this protein is Cytochrome b (MT-CYB).